A 375-amino-acid chain; its full sequence is uncharacterized protein (375 aa).

In terms of domain architecture, Radical SAM core spans 78 to 302 (KKIEITSTIH…IFPNIRITSP (225 aa)). Residues Cys-92, Cys-98, and Cys-101 each coordinate [4Fe-4S] cluster.

Requires [4Fe-4S] cluster as cofactor.

This is an uncharacterized protein from Methanocaldococcus jannaschii (strain ATCC 43067 / DSM 2661 / JAL-1 / JCM 10045 / NBRC 100440) (Methanococcus jannaschii).